The sequence spans 558 residues: Arginine--tRNA ligase (558 aa).

The 'HIGH' region motif lies at 116-126 (ANPNGPLHVGH).

Belongs to the class-I aminoacyl-tRNA synthetase family.

The protein localises to the cytoplasm. The enzyme catalyses tRNA(Arg) + L-arginine + ATP = L-arginyl-tRNA(Arg) + AMP + diphosphate. The polypeptide is Arginine--tRNA ligase (Methanocorpusculum labreanum (strain ATCC 43576 / DSM 4855 / Z)).